A 461-amino-acid polypeptide reads, in one-letter code: Threonine/serine transporter ThrP (461 aa).

12 helical membrane passes run Ile17–Thr37, Trp40–Met60, Trp97–Phe117, Ala123–Val143, Ile156–Phe176, Gly201–Ile221, Ile244–Ile264, Ile278–Gly298, Val333–Ile353, Phe360–Ile380, Ile401–Met421, and Ser430–Leu450.

It belongs to the amino acid-polyamine-organocation (APC) superfamily.

Its subcellular location is the cell inner membrane. The enzyme catalyses L-threonine(in) + H(+)(in) = L-threonine(out) + H(+)(out). The catalysed reaction is L-serine(in) + H(+)(in) = L-serine(out) + H(+)(out). Its function is as follows. Permease that mediates the proton-dependent threonine and serine uptake. The polypeptide is Threonine/serine transporter ThrP (Salmonella typhi).